Consider the following 212-residue polypeptide: External core antigen (212 aa).

An N-terminal signal peptide occupies residues Met1 to Ala19. Positions Gly25–Leu27 are HBEAG. Residues Asn165–Cys212 are disordered. Basic residues predominate over residues Val178–Ser205. Residues Ser184–Pro190 form a 1; half-length repeat. Residues Ser184–Gln206 form a 3 X 8 AA repeats of S-P-R-R-R-R-S-Q region. Positions Ser184–Cys212 are excised as a propeptide. A run of 2 repeats spans residues Ser191–Gln198 and Ser199–Gln206.

Belongs to the orthohepadnavirus precore antigen family. Homodimerizes. Post-translationally, phosphorylated. Cleaved by host furin.

It localises to the secreted. It is found in the host nucleus. May regulate immune response to the intracellular capsid in acting as a T-cell tolerogen, by having an immunoregulatory effect which prevents destruction of infected cells by cytotoxic T-cells. This immune regulation may predispose to chronicity during perinatal infections and prevent severe liver injury during adult infections. This is External core antigen from Homo sapiens (Human).